Here is a 199-residue protein sequence, read N- to C-terminus: dITP/XTP pyrophosphatase (199 aa).

Residue 8 to 13 (TSNINK) coordinates substrate. The Proton acceptor role is filled by Asp68. Position 68 (Asp68) interacts with Mg(2+). Substrate-binding positions include Ser69, 155–158 (FGYN), Lys177, and 182–183 (HR).

The protein belongs to the HAM1 NTPase family. In terms of assembly, homodimer. The cofactor is Mg(2+).

The enzyme catalyses XTP + H2O = XMP + diphosphate + H(+). It carries out the reaction dITP + H2O = dIMP + diphosphate + H(+). The catalysed reaction is ITP + H2O = IMP + diphosphate + H(+). Its function is as follows. Pyrophosphatase that catalyzes the hydrolysis of nucleoside triphosphates to their monophosphate derivatives, with a high preference for the non-canonical purine nucleotides XTP (xanthosine triphosphate), dITP (deoxyinosine triphosphate) and ITP. Seems to function as a house-cleaning enzyme that removes non-canonical purine nucleotides from the nucleotide pool, thus preventing their incorporation into DNA/RNA and avoiding chromosomal lesions. This chain is dITP/XTP pyrophosphatase, found in Borrelia recurrentis (strain A1).